The chain runs to 242 residues: Mannose-P-dolichol utilization defect 1 protein homolog (242 aa).

The 59-residue stretch at 37-95 (LSRGLGFAITLGSILLFVPQILKIQAARSAQGISAASQLLALVGAIGTASYSYRSGFVF) folds into the PQ-loop 1 domain. 7 consecutive transmembrane segments (helical) span residues 40–60 (GLGFAITLGSILLFVPQILKI), 68–88 (GISAASQLLALVGAIGTASYS), 98–118 (WGDSFFVAVQLVIIILQIFLF), 120–140 (GQTMLSVGFLGIVSAVAYGVV), 148–168 (TLTAVQTAGIPIVVVSKLLQI), 180–200 (LSLISVFLQFAGTLARVFTSV), and 207–227 (LLIVSYSTAAVLNGLIFAQFF). The region spanning 152–202 (VQTAGIPIVVVSKLLQISQNYRAQSTGQLSLISVFLQFAGTLARVFTSVQD) is the PQ-loop 2 domain.

This sequence belongs to the MPDU1 (TC 2.A.43.3) family.

The protein resides in the membrane. The protein is Mannose-P-dolichol utilization defect 1 protein homolog of Caenorhabditis elegans.